The chain runs to 452 residues: Lichenan permease IIC component (452 aa).

Residues 8-421 enclose the PTS EIIC type-3 domain; the sequence is LEEKVMPIAG…AVSFVVYYPF (414 aa). A run of 10 helical transmembrane segments spans residues 31–51, 72–92, 104–124, 138–158, 187–207, 218–238, 246–266, 291–311, 351–373, and 402–422; these read GIILTMPLIIIGSFFLIIGNL, LAYPVDATFEIMGLVAAFGIA, LSAGAISLAAFLLATPYQVPF, GIPLSLMGSKGLFVAMIIAMV, FVALIPGFAVIFLIWAARLIV, IVSVLLGTPLSILGGSLGGSL, LLWACGLHGANIVGGVMAPIW, FFDIWVNIGGSGATLALVVTM, LLLPFIITPLVTVTLTYIGMSTG, and SGAVMQAINIAVSFVVYYPFF.

It is found in the cell membrane. The phosphoenolpyruvate-dependent sugar phosphotransferase system (PTS), a major carbohydrate active -transport system, catalyzes the phosphorylation of incoming sugar substrates concomitant with their translocation across the cell membrane. This system is involved in lichenan transport. This is Lichenan permease IIC component (licC) from Bacillus subtilis (strain 168).